The primary structure comprises 388 residues: Na(+)/H(+) antiporter NhaA (388 aa).

A run of 11 helical transmembrane segments spans residues glycine 14–threonine 34, methionine 59–valine 79, alanine 95–phenylalanine 115, glycine 125–glycine 145, isoleucine 154–phenylalanine 174, leucine 179–leucine 199, valine 219–leucine 239, valine 254–valine 274, isoleucine 292–leucine 312, isoleucine 328–leucine 348, and tryptophan 360–leucine 380.

The protein belongs to the NhaA Na(+)/H(+) (TC 2.A.33) antiporter family.

It localises to the cell inner membrane. It carries out the reaction Na(+)(in) + 2 H(+)(out) = Na(+)(out) + 2 H(+)(in). Na(+)/H(+) antiporter that extrudes sodium in exchange for external protons. In Salmonella paratyphi A (strain ATCC 9150 / SARB42), this protein is Na(+)/H(+) antiporter NhaA.